Here is a 243-residue protein sequence, read N- to C-terminus: DNA repair protein RecO (243 aa).

The protein belongs to the RecO family.

Involved in DNA repair and RecF pathway recombination. The chain is DNA repair protein RecO from Thermobifida fusca (strain YX).